We begin with the raw amino-acid sequence, 1155 residues long: DNA-directed RNA polymerase subunit beta (1155 aa).

It belongs to the RNA polymerase beta chain family. In terms of assembly, the RNAP catalytic core consists of 2 alpha, 1 beta, 1 beta' and 1 omega subunit. When a sigma factor is associated with the core the holoenzyme is formed, which can initiate transcription.

It catalyses the reaction RNA(n) + a ribonucleoside 5'-triphosphate = RNA(n+1) + diphosphate. In terms of biological role, DNA-dependent RNA polymerase catalyzes the transcription of DNA into RNA using the four ribonucleoside triphosphates as substrates. The sequence is that of DNA-directed RNA polymerase subunit beta from Borrelia recurrentis (strain A1).